Reading from the N-terminus, the 72-residue chain is MKKDIHPDYHDITVVMTDGSEFVTRSTYKGESLRLDIDPKSHPAWTGVHRLIDSGGQLAKFNKKFAGFGLKK.

It belongs to the bacterial ribosomal protein bL31 family. Type A subfamily. As to quaternary structure, part of the 50S ribosomal subunit.

In terms of biological role, binds the 23S rRNA. The polypeptide is Large ribosomal subunit protein bL31 (Rhodospirillum rubrum (strain ATCC 11170 / ATH 1.1.1 / DSM 467 / LMG 4362 / NCIMB 8255 / S1)).